We begin with the raw amino-acid sequence, 175 residues long: Alkyl hydroperoxide reductase AhpD (175 aa).

The active-site Proton donor is the Cys-130. Cys-130 and Cys-133 are disulfide-bonded. Catalysis depends on Cys-133, which acts as the Cysteine sulfenic acid (-SOH) intermediate.

Belongs to the AhpD family. In terms of assembly, homotrimer.

The enzyme catalyses N(6)-[(R)-dihydrolipoyl]-L-lysyl-[lipoyl-carrier protein] + a hydroperoxide = N(6)-[(R)-lipoyl]-L-lysyl-[lipoyl-carrier protein] + an alcohol + H2O. Functionally, antioxidant protein with alkyl hydroperoxidase activity. Required for the reduction of the AhpC active site cysteine residues and for the regeneration of the AhpC enzyme activity. The chain is Alkyl hydroperoxide reductase AhpD from Mycobacteroides abscessus (strain ATCC 19977 / DSM 44196 / CCUG 20993 / CIP 104536 / JCM 13569 / NCTC 13031 / TMC 1543 / L948) (Mycobacterium abscessus).